Reading from the N-terminus, the 135-residue chain is Thioredoxin H5 (135 aa).

The Thioredoxin domain occupies 13-128 (EHLDYSGGNV…LQEKFEQLNR (116 aa)). Active-site nucleophile residues include cysteine 54 and cysteine 57. Residues cysteine 54 and cysteine 57 are joined by a disulfide bond.

This sequence belongs to the thioredoxin family. Plant H-type subfamily.

The protein localises to the cytoplasm. Probable thiol-disulfide oxidoreductase that may be involved in the redox regulation of a number of cytosolic enzymes. The polypeptide is Thioredoxin H5 (Oryza sativa subsp. japonica (Rice)).